The following is a 307-amino-acid chain: Dimethyladenosine transferase (307 aa).

S-adenosyl-L-methionine contacts are provided by H31, L33, G58, E79, D107, and N122.

This sequence belongs to the class I-like SAM-binding methyltransferase superfamily. rRNA adenine N(6)-methyltransferase family.

The enzyme catalyses adenosine(1779)/adenosine(1780) in 18S rRNA + 4 S-adenosyl-L-methionine = N(6)-dimethyladenosine(1779)/N(6)-dimethyladenosine(1780) in 18S rRNA + 4 S-adenosyl-L-homocysteine + 4 H(+). Its function is as follows. Specifically dimethylates two adjacent adenosines in the loop of a conserved hairpin near the 3'-end of 18S rRNA in the 40S particle. The sequence is that of Dimethyladenosine transferase (dim1) from Schizosaccharomyces pombe (strain 972 / ATCC 24843) (Fission yeast).